A 399-amino-acid polypeptide reads, in one-letter code: G2/mitotic-specific cyclin-B2 (399 aa).

The disordered stretch occupies residues 58–78 (PVKATKGPGKMTNTVVPPKPP).

Belongs to the cyclin family. Cyclin AB subfamily. Interacts with the CDK1 protein kinase to form a serine/threonine kinase holoenzyme complex also known as maturation promoting factor (MPF). The cyclin subunit imparts substrate specificity to the complex.

In terms of biological role, essential for the control of the cell cycle at the G2/M (mitosis) transition. This chain is G2/mitotic-specific cyclin-B2 (CCNB2), found in Gallus gallus (Chicken).